The primary structure comprises 273 residues: Glutamate 5-kinase (273 aa).

Lys-15 is a binding site for ATP. 3 residues coordinate substrate: Ser-55, Asp-142, and Asn-158. Residues 178-179 and 220-226 contribute to the ATP site; these read SD and TGGMLSK.

This sequence belongs to the glutamate 5-kinase family.

The protein localises to the cytoplasm. The catalysed reaction is L-glutamate + ATP = L-glutamyl 5-phosphate + ADP. The protein operates within amino-acid biosynthesis; L-proline biosynthesis; L-glutamate 5-semialdehyde from L-glutamate: step 1/2. In terms of biological role, catalyzes the transfer of a phosphate group to glutamate to form L-glutamate 5-phosphate. This Streptococcus pyogenes serotype M1 protein is Glutamate 5-kinase.